Here is a 169-residue protein sequence, read N- to C-terminus: MPLLDSFTVDHTRMNAPAVRVAKTMTTPKGDTITVFDLRFCVPNKEILSERGIHTLEHLFAGFMRDHLNSDRVEIIDISPMGCRTGFYMSLIGTPKEAEVAECWLAAMEDVLKVKQQSEIPELNEYQCGTYEMHSLEQAKEIAKNIIAAGVNVNRNDDLKLSDEILKGL.

Residues His-54, His-58, and Cys-128 each contribute to the Fe cation site.

This sequence belongs to the LuxS family. Homodimer. It depends on Fe cation as a cofactor.

It catalyses the reaction S-(5-deoxy-D-ribos-5-yl)-L-homocysteine = (S)-4,5-dihydroxypentane-2,3-dione + L-homocysteine. In terms of biological role, involved in the synthesis of autoinducer 2 (AI-2) which is secreted by bacteria and is used to communicate both the cell density and the metabolic potential of the environment. The regulation of gene expression in response to changes in cell density is called quorum sensing. Catalyzes the transformation of S-ribosylhomocysteine (RHC) to homocysteine (HC) and 4,5-dihydroxy-2,3-pentadione (DPD). The chain is S-ribosylhomocysteine lyase from Shewanella loihica (strain ATCC BAA-1088 / PV-4).